We begin with the raw amino-acid sequence, 258 residues long: Ribosomal RNA small subunit methyltransferase A (258 aa).

Residues histidine 13, leucine 15, glycine 40, glutamate 61, aspartate 85, and asparagine 106 each coordinate S-adenosyl-L-methionine.

It belongs to the class I-like SAM-binding methyltransferase superfamily. rRNA adenine N(6)-methyltransferase family. RsmA subfamily.

It is found in the cytoplasm. The catalysed reaction is adenosine(1518)/adenosine(1519) in 16S rRNA + 4 S-adenosyl-L-methionine = N(6)-dimethyladenosine(1518)/N(6)-dimethyladenosine(1519) in 16S rRNA + 4 S-adenosyl-L-homocysteine + 4 H(+). Its function is as follows. Specifically dimethylates two adjacent adenosines (A1518 and A1519) in the loop of a conserved hairpin near the 3'-end of 16S rRNA in the 30S particle. May play a critical role in biogenesis of 30S subunits. The protein is Ribosomal RNA small subunit methyltransferase A of Porphyromonas gingivalis (strain ATCC 33277 / DSM 20709 / CIP 103683 / JCM 12257 / NCTC 11834 / 2561).